The primary structure comprises 123 residues: Small ribosomal subunit protein uS12 (123 aa).

Positions 1 to 31 are disordered; it reads MPTIQQLVRKGRHSKKAKVATAGLKGSPQRR. Residues 9-18 show a composition bias toward basic residues; sequence RKGRHSKKAK. Aspartate 89 carries the post-translational modification 3-methylthioaspartic acid.

The protein belongs to the universal ribosomal protein uS12 family. As to quaternary structure, part of the 30S ribosomal subunit. Contacts proteins S8 and S17. May interact with IF1 in the 30S initiation complex.

In terms of biological role, with S4 and S5 plays an important role in translational accuracy. Functionally, interacts with and stabilizes bases of the 16S rRNA that are involved in tRNA selection in the A site and with the mRNA backbone. Located at the interface of the 30S and 50S subunits, it traverses the body of the 30S subunit contacting proteins on the other side and probably holding the rRNA structure together. The combined cluster of proteins S8, S12 and S17 appears to hold together the shoulder and platform of the 30S subunit. The chain is Small ribosomal subunit protein uS12 from Corynebacterium aurimucosum (strain ATCC 700975 / DSM 44827 / CIP 107346 / CN-1) (Corynebacterium nigricans).